Reading from the N-terminus, the 113-residue chain is uncharacterized protein (113 aa).

The tract at residues 31–113 (SNNNNNNNNN…YSPTKFNLQY (83 aa)) is disordered. Low complexity predominate over residues 32–98 (NNNNNNNNNN…NNNNNNNNNN (67 aa)). Over residues 99–113 (SSSFEYSPTKFNLQY) the composition is skewed to polar residues.

This is an uncharacterized protein from Dictyostelium discoideum (Social amoeba).